A 173-amino-acid chain; its full sequence is Crossover junction endodeoxyribonuclease RuvC (173 aa).

Active-site residues include D8, E67, and D139. Residues D8, E67, and D139 each coordinate Mg(2+).

Belongs to the RuvC family. In terms of assembly, homodimer which binds Holliday junction (HJ) DNA. The HJ becomes 2-fold symmetrical on binding to RuvC with unstacked arms; it has a different conformation from HJ DNA in complex with RuvA. In the full resolvosome a probable DNA-RuvA(4)-RuvB(12)-RuvC(2) complex forms which resolves the HJ. Requires Mg(2+) as cofactor.

The protein localises to the cytoplasm. The catalysed reaction is Endonucleolytic cleavage at a junction such as a reciprocal single-stranded crossover between two homologous DNA duplexes (Holliday junction).. Functionally, the RuvA-RuvB-RuvC complex processes Holliday junction (HJ) DNA during genetic recombination and DNA repair. Endonuclease that resolves HJ intermediates. Cleaves cruciform DNA by making single-stranded nicks across the HJ at symmetrical positions within the homologous arms, yielding a 5'-phosphate and a 3'-hydroxyl group; requires a central core of homology in the junction. The consensus cleavage sequence is 5'-(A/T)TT(C/G)-3'. Cleavage occurs on the 3'-side of the TT dinucleotide at the point of strand exchange. HJ branch migration catalyzed by RuvA-RuvB allows RuvC to scan DNA until it finds its consensus sequence, where it cleaves and resolves the cruciform DNA. The sequence is that of Crossover junction endodeoxyribonuclease RuvC from Yersinia pseudotuberculosis serotype O:1b (strain IP 31758).